A 101-amino-acid chain; its full sequence is Small ribosomal subunit protein uS14 (101 aa).

The disordered stretch occupies residues 49–70; sequence QSLPRDSSPSRQRNRCNQTGRP. Polar residues predominate over residues 52–68; that stretch reads PRDSSPSRQRNRCNQTG.

The protein belongs to the universal ribosomal protein uS14 family. Part of the 30S ribosomal subunit. Contacts proteins S3 and S10.

Its function is as follows. Binds 16S rRNA, required for the assembly of 30S particles and may also be responsible for determining the conformation of the 16S rRNA at the A site. In Yersinia pseudotuberculosis serotype O:1b (strain IP 31758), this protein is Small ribosomal subunit protein uS14.